A 339-amino-acid polypeptide reads, in one-letter code: uncharacterized protein (339 aa).

The Rhodanese domain occupies 17–111 (VRGEIKCLDV…WEDLSLPQNE (95 aa)).

This is an uncharacterized protein from Schizosaccharomyces pombe (strain 972 / ATCC 24843) (Fission yeast).